The following is a 431-amino-acid chain: Glutamyl-tRNA(Gln) amidotransferase subunit A (431 aa).

Residues lysine 55 and serine 130 each act as charge relay system in the active site. The active-site Acyl-ester intermediate is the serine 154.

The protein belongs to the amidase family. GatA subfamily. Heterotrimer of A, B and C subunits.

It catalyses the reaction L-glutamyl-tRNA(Gln) + L-glutamine + ATP + H2O = L-glutaminyl-tRNA(Gln) + L-glutamate + ADP + phosphate + H(+). Its function is as follows. Allows the formation of correctly charged Gln-tRNA(Gln) through the transamidation of misacylated Glu-tRNA(Gln) in organisms which lack glutaminyl-tRNA synthetase. The reaction takes place in the presence of glutamine and ATP through an activated gamma-phospho-Glu-tRNA(Gln). This chain is Glutamyl-tRNA(Gln) amidotransferase subunit A, found in Methanococcus vannielii (strain ATCC 35089 / DSM 1224 / JCM 13029 / OCM 148 / SB).